The primary structure comprises 385 residues: MAEAGVAAASLFGADRRLCSADILPPAEVRARIEVAVLNFLAALTDPAAPAISALPLISRGAANRGLRRALLRDDVSSVYLSYASCKRSLTRANDAKAFVRVWKVMEMCYKILGEGKLVTLRELFYTLLSESPTYFTCQRHVNQTVQDVVSLLRCTRQSLGIMASSRGALIGRLVLQGPEEEHVDCSILGPSGHAITGDLNVLSKLIFSSDARYIIVVEKDAIFQRLAEDRIYSHLPCILITAKGYPDLATRFILHRLSQTYPNMPIFALVDWNPAGLAILCTYKYGSISMGLESYRYACNVKWLGLRGDDLQLIPQSAYQELKPRDLQIAKSLLSSKFLQDKHRAELTLMLETGKRAEIEALYSHGFDFLGKYVARKIVQGDYI.

The region spanning 24 to 169 (LPPAEVRARI…LGIMASSRGA (146 aa)) is the Topo IIA-type catalytic domain. Residue Tyr-126 is the O-(5'-phospho-DNA)-tyrosine intermediate of the active site. Residues Glu-219 and Asp-272 each contribute to the Mg(2+) site.

Belongs to the TOP6A family. As to quaternary structure, interacts with TOP6B. Requires Mg(2+) as cofactor. In terms of tissue distribution, highly expressed in flowers before pollination. Expressed in roots and shoots.

The protein localises to the nucleus. The catalysed reaction is ATP-dependent breakage, passage and rejoining of double-stranded DNA.. Functionally, required for meiotic recombination. Mediates DNA cleavage that forms the double-strand breaks (DSB) that initiate meiotic recombination. This is Meiotic recombination protein SPO11-2 (SPO11-2) from Oryza sativa subsp. indica (Rice).